Here is a 37-residue protein sequence, read N- to C-terminus: Small ribosomal subunit protein eS32 (37 aa).

The protein belongs to the eukaryotic ribosomal protein eS32 family. In terms of assembly, part of the small ribosomal subunit.

Its function is as follows. Interacts with N(4)-acetylcytidine (ac(4)C) 1459 of the small rRNA; the acetyl group of ac(4)C1459 briges the interaction with this protein. The chain is Small ribosomal subunit protein eS32 (rpl41e) from Thermococcus kodakarensis (strain ATCC BAA-918 / JCM 12380 / KOD1) (Pyrococcus kodakaraensis (strain KOD1)).